The following is a 365-amino-acid chain: tRNA/tmRNA (uracil-C(5))-methyltransferase (365 aa).

Positions 189, 217, 222, 238, and 298 each coordinate S-adenosyl-L-methionine. Residue C323 is the Nucleophile of the active site. E357 functions as the Proton acceptor in the catalytic mechanism.

Belongs to the class I-like SAM-binding methyltransferase superfamily. RNA M5U methyltransferase family. TrmA subfamily.

The catalysed reaction is uridine(54) in tRNA + S-adenosyl-L-methionine = 5-methyluridine(54) in tRNA + S-adenosyl-L-homocysteine + H(+). It carries out the reaction uridine(341) in tmRNA + S-adenosyl-L-methionine = 5-methyluridine(341) in tmRNA + S-adenosyl-L-homocysteine + H(+). In terms of biological role, dual-specificity methyltransferase that catalyzes the formation of 5-methyluridine at position 54 (m5U54) in all tRNAs, and that of position 341 (m5U341) in tmRNA (transfer-mRNA). This chain is tRNA/tmRNA (uracil-C(5))-methyltransferase, found in Shewanella sp. (strain ANA-3).